Reading from the N-terminus, the 536-residue chain is MAKQVVFDREAREALEKGITKLTEAVRVTLGPRGRNVVLEKKFGAPTITNDGVTIAKEVELEDPLENVGALLVREVASKTNDVAGDGTTTACVLAQAIVREGMKNVAAGANPMFMKRGIEKAVAAVVENLKAQARPVETKDSISQVASISANDPQIGALVADAMEKVGKDGVITVEESKGMETAVDVVEGMQFDRGYISPYMVTDNERMEAVLEEPYILITDKKITAVADLVPVLERVVRTGKPLLIICEDMEGEALATLVVNKIRGTFTCVAVKAPAFGDRRKAMLQDIAILTGGQVITEEAGLKLENTTLDMLGQARQVRVGKEETTIVEGRGKEEAIEARIAQIRREYEESTSDYDREKLQERLAKLAGGVAVIKVGAATETEMKEKKMRIEDALAATRAAVEEGIVPGGGTALVRAQTALDGVQAQGDELTGVRLVYRALEEPMRQIAANAGVDGSVVVEKVRQSGDSMGFNAATREYVNLFEAGIVDPLKVTRSALENAASIASLVLTTESLIADIPEEEPPVPGGGMPPM.

Residues 29–32 (TLGP), 86–90 (DGTTT), Gly413, 476–478 (NAA), and Asp492 contribute to the ATP site.

It belongs to the chaperonin (HSP60) family. In terms of assembly, forms a cylinder of 14 subunits composed of two heptameric rings stacked back-to-back. Interacts with the co-chaperonin GroES.

Its subcellular location is the cytoplasm. The catalysed reaction is ATP + H2O + a folded polypeptide = ADP + phosphate + an unfolded polypeptide.. Its function is as follows. Together with its co-chaperonin GroES, plays an essential role in assisting protein folding. The GroEL-GroES system forms a nano-cage that allows encapsulation of the non-native substrate proteins and provides a physical environment optimized to promote and accelerate protein folding. This is Chaperonin GroEL 2 from Moorella thermoacetica (strain ATCC 39073 / JCM 9320).